The following is a 557-amino-acid chain: Membrane protein insertase YidC (557 aa).

3 consecutive transmembrane segments (helical) span residues 371–391 (WGWS…PLSA), 437–457 (LGGC…YWVL), and 515–535 (PIVF…YWVV).

It belongs to the OXA1/ALB3/YidC family. Type 1 subfamily. As to quaternary structure, interacts with the Sec translocase complex via SecD. Specifically interacts with transmembrane segments of nascent integral membrane proteins during membrane integration.

It is found in the cell inner membrane. Its function is as follows. Required for the insertion and/or proper folding and/or complex formation of integral membrane proteins into the membrane. Involved in integration of membrane proteins that insert both dependently and independently of the Sec translocase complex, as well as at least some lipoproteins. Aids folding of multispanning membrane proteins. The polypeptide is Membrane protein insertase YidC (Polynucleobacter necessarius subsp. necessarius (strain STIR1)).